The chain runs to 671 residues: MSKSFKLHSVFKPAGDQPEAIRKLEEGLENGLAHQTLLGVTGSGKTFTVANVIADLNRPTMILAPNKTLAAQLYGEMKEFFPDNAVEYFVSYYDYYQPEAYVPSSDTFIEKDASVNEHIEQMRLSATKALLERRDVVVVASVSAIYGLGDPDLYLKMMLHLTRGMIIDQRSILRRLSELQYSRNDQVFQRGTFRVRGEVIDIFPAESDEWALRVELFDEEVERLSIFDPLTGQLQHEVPRFTVYPKTHYVTPRERILQAMEEIKVELAERRQVLLANNKLLEEQRLSQRTQFDLEMMNELGYCSGIENYSRYLSGRGPGEAPPTLFDYLPADGLLIVDESHVTIPQIGGMYKGDRSRKETLVEYGFRLPSALDNRPMRFEEFEALAPQTIYVSATPGKYELEKSGGDIIEQVVRPTGLLDPLIEVRPVATQVDDLLSEIRIRAAINERVLVTTLTKRMAEDLTDYLSEHGAKVRYLHSDIDTVERVEIIRDLRLGEFDVLVGINLLREGLDMPEVSLVAILDADKEGFLRSERSLIQTIGRAARNLNGKAILYGDRITASMEKAIGETERRRAKQQAYNEERGIIPQGLNKKIGDILQLGQPSMRGKGKGRGSHKMADTTQYQSLSPKALDQKIRELEAKMYTYAQNLEFEQAAELRDQVHQLRQQFIAIS.

Positions 26–183 constitute a Helicase ATP-binding domain; the sequence is EGLENGLAHQ…RRLSELQYSR (158 aa). 39-46 is a binding site for ATP; the sequence is GVTGSGKT. A Beta-hairpin motif is present at residues 92-115; the sequence is YYDYYQPEAYVPSSDTFIEKDASV. In terms of domain architecture, Helicase C-terminal spans 431-597; it reads QVDDLLSEIR…GLNKKIGDIL (167 aa). The region spanning 631-666 is the UVR domain; the sequence is DQKIRELEAKMYTYAQNLEFEQAAELRDQVHQLRQQ.

This sequence belongs to the UvrB family. In terms of assembly, forms a heterotetramer with UvrA during the search for lesions. Interacts with UvrC in an incision complex.

It localises to the cytoplasm. Its function is as follows. The UvrABC repair system catalyzes the recognition and processing of DNA lesions. A damage recognition complex composed of 2 UvrA and 2 UvrB subunits scans DNA for abnormalities. Upon binding of the UvrA(2)B(2) complex to a putative damaged site, the DNA wraps around one UvrB monomer. DNA wrap is dependent on ATP binding by UvrB and probably causes local melting of the DNA helix, facilitating insertion of UvrB beta-hairpin between the DNA strands. Then UvrB probes one DNA strand for the presence of a lesion. If a lesion is found the UvrA subunits dissociate and the UvrB-DNA preincision complex is formed. This complex is subsequently bound by UvrC and the second UvrB is released. If no lesion is found, the DNA wraps around the other UvrB subunit that will check the other stand for damage. The sequence is that of UvrABC system protein B from Yersinia pseudotuberculosis serotype IB (strain PB1/+).